A 360-amino-acid polypeptide reads, in one-letter code: Spore germination protein GerQB (360 aa).

A run of 10 helical transmembrane segments spans residues 11 to 31 (SPYMVFFLIITIQMGVGMLGF), 45 to 65 (ISTLLFGISVNVMIWIIYQIL), 84 to 104 (IGGLLNFIFLSYIVLLGATTL), 116 to 136 (FPSISSWVIAGAFLGLCYYIV), 142 to 162 (VVAGIGFFGIVIPSILIFTFF), 188 to 208 (MKGNMFSFFGFEMLLLYYPFI), 220 to 240 (YANLVTTIVYTYLMILTLAFF), 270 to 290 (IIVSVWAFFILPNVSFTLWGV), 300 to 320 (IKQKYVLPVIILFIFILSFFL), and 331 to 351 (TWTGQIGFVYIYVYLPVLWLI).

This sequence belongs to the amino acid-polyamine-organocation (APC) superfamily. Spore germination protein (SGP) (TC 2.A.3.9) family.

The protein resides in the membrane. In terms of biological role, required for the germination response to inosine. Has no role in L-alanine germination. This Bacillus cereus protein is Spore germination protein GerQB (gerQB).